We begin with the raw amino-acid sequence, 379 residues long: Transaminase htyB (379 aa).

Arg92 is a pyridoxal 5'-phosphate binding site. Lys203 carries the post-translational modification N6-(pyridoxal phosphate)lysine. A pyridoxal 5'-phosphate-binding site is contributed by Glu239.

This sequence belongs to the class-IV pyridoxal-phosphate-dependent aminotransferase family. It depends on pyridoxal 5'-phosphate as a cofactor.

The protein operates within antifungal biosynthesis. Functionally, transaminase; part of the gene cluster that mediates the de novo generation of L-homotyrosine from acetyl-CoA and 4-hydroxyphenyl-pyruvate. L-homotyrosine is a building block of echinocandin B, a fungal lipidated cyclic hexapeptide that acts as an antifungal agent. L-homotyrosine 4-hydroxyphenyl-pyruvate first undergoes an aldol-type condensation by htyA with the C-2 of acetyl-CoA followed by the release of CoA to form 2-(4-hydroxybenzyl)-malate. This is followed by isomerization of 2-(4-hydroxy-benzyl)-malate to 3-(4-hydroxybenzyl)-malate by htyD. Thereafter, 3-(4-hydroxybenzyl)-malate undergoes decarboxylation and oxidation to form 2-oxo-4-(4-hydroxybenzyl)butanoic acid, coupled to reduction of NAD(+) to NADH by htyC. The product then undergoes transamination catalyzed by htyB to form L-homotyrosine. The sequence is that of Transaminase htyB from Aspergillus rugulosus (Emericella rugulosa).